A 181-amino-acid polypeptide reads, in one-letter code: Transcriptional repressor NrdR (181 aa).

A zinc finger spans residues 3-34 (CLFCQHTDTRVIDSRVSEDGATIRRRRECEAC). In terms of domain architecture, ATP-cone spans 49–139 (PVIIKKDGGR…VYRSFQDVAD (91 aa)).

Belongs to the NrdR family. Zn(2+) serves as cofactor.

Negatively regulates transcription of bacterial ribonucleotide reductase nrd genes and operons by binding to NrdR-boxes. In Xylella fastidiosa (strain M12), this protein is Transcriptional repressor NrdR.